The sequence spans 501 residues: Chromosomal replication initiator protein DnaA (501 aa).

The domain I, interacts with DnaA modulators stretch occupies residues 1 to 90 (MSVELWQQCV…KRSSAPRAAP (90 aa)). Residues 91–164 (NAPLAAAASQ…QVEGALKHTS (74 aa)) are domain II. Residues 103 to 121 (AAPVASTPAPAPSKSSAKK) are compositionally biased toward low complexity. Residues 103 to 150 (AAPVASTPAPAPSKSSAKKNAAENEEPSRDSFDPMAGASSQQAPIRAE) form a disordered region. The span at 122-134 (NAAENEEPSRDSF) shows a compositional bias: basic and acidic residues. The segment at 165–381 (YLNRTFTFEN…GALKRVIAHS (217 aa)) is domain III, AAA+ region. 4 residues coordinate ATP: glycine 209, glycine 211, lysine 212, and threonine 213. The interval 382–501 (HFMGRDITIE…YKNLLRTLTT (120 aa)) is domain IV, binds dsDNA.

The protein belongs to the DnaA family. Oligomerizes as a right-handed, spiral filament on DNA at oriC.

The protein localises to the cytoplasm. In terms of biological role, plays an essential role in the initiation and regulation of chromosomal replication. ATP-DnaA binds to the origin of replication (oriC) to initiate formation of the DNA replication initiation complex once per cell cycle. Binds the DnaA box (a 9 base pair repeat at the origin) and separates the double-stranded (ds)DNA. Forms a right-handed helical filament on oriC DNA; dsDNA binds to the exterior of the filament while single-stranded (ss)DNA is stabiized in the filament's interior. The ATP-DnaA-oriC complex binds and stabilizes one strand of the AT-rich DNA unwinding element (DUE), permitting loading of DNA polymerase. After initiation quickly degrades to an ADP-DnaA complex that is not apt for DNA replication. Binds acidic phospholipids. The polypeptide is Chromosomal replication initiator protein DnaA (Pseudomonas fluorescens (strain SBW25)).